The sequence spans 163 residues: Shikimate kinase (163 aa).

10-15 (GVGKTT) serves as a coordination point for ATP. Threonine 14 serves as a coordination point for Mg(2+). Residues aspartate 28, arginine 52, and glycine 75 each contribute to the substrate site. Arginine 116 contacts ATP. Residue arginine 134 coordinates substrate. ATP is bound at residue arginine 151.

Belongs to the shikimate kinase family. In terms of assembly, monomer. Requires Mg(2+) as cofactor.

The protein resides in the cytoplasm. It carries out the reaction shikimate + ATP = 3-phosphoshikimate + ADP + H(+). It participates in metabolic intermediate biosynthesis; chorismate biosynthesis; chorismate from D-erythrose 4-phosphate and phosphoenolpyruvate: step 5/7. Its function is as follows. Catalyzes the specific phosphorylation of the 3-hydroxyl group of shikimic acid using ATP as a cosubstrate. The protein is Shikimate kinase of Streptococcus pyogenes serotype M4 (strain MGAS10750).